The primary structure comprises 325 residues: Tagatose 1,6-diphosphate aldolase (325 aa).

It belongs to the aldolase LacD family.

The catalysed reaction is D-tagatofuranose 1,6-bisphosphate = D-glyceraldehyde 3-phosphate + dihydroxyacetone phosphate. It participates in carbohydrate metabolism; D-tagatose 6-phosphate degradation; D-glyceraldehyde 3-phosphate and glycerone phosphate from D-tagatose 6-phosphate: step 2/2. The polypeptide is Tagatose 1,6-diphosphate aldolase (Staphylococcus haemolyticus (strain JCSC1435)).